Here is a 282-residue protein sequence, read N- to C-terminus: Pantothenate synthetase (282 aa).

Residue 30 to 37 (MGALHQGH) coordinates ATP. Histidine 37 acts as the Proton donor in catalysis. Glutamine 61 is a (R)-pantoate binding site. Residue glutamine 61 participates in beta-alanine binding. Residue 149-152 (GEKD) coordinates ATP. Glutamine 155 is a (R)-pantoate binding site. Residues leucine 178 and 186 to 189 (MSSR) contribute to the ATP site.

The protein belongs to the pantothenate synthetase family. Homodimer.

The protein resides in the cytoplasm. The catalysed reaction is (R)-pantoate + beta-alanine + ATP = (R)-pantothenate + AMP + diphosphate + H(+). It functions in the pathway cofactor biosynthesis; (R)-pantothenate biosynthesis; (R)-pantothenate from (R)-pantoate and beta-alanine: step 1/1. Catalyzes the condensation of pantoate with beta-alanine in an ATP-dependent reaction via a pantoyl-adenylate intermediate. This Flavobacterium psychrophilum (strain ATCC 49511 / DSM 21280 / CIP 103535 / JIP02/86) protein is Pantothenate synthetase.